Reading from the N-terminus, the 443-residue chain is 5-methylthioadenosine/S-adenosylhomocysteine deaminase 1 (443 aa).

Positions 69 and 71 each coordinate Zn(2+). Substrate is bound by residues Glu-98 and His-191. Residue His-218 coordinates Zn(2+). Glu-221 and Asp-306 together coordinate substrate. Asp-306 is a binding site for Zn(2+).

This sequence belongs to the metallo-dependent hydrolases superfamily. MTA/SAH deaminase family. Zn(2+) serves as cofactor.

The catalysed reaction is S-adenosyl-L-homocysteine + H2O + H(+) = S-inosyl-L-homocysteine + NH4(+). The enzyme catalyses S-methyl-5'-thioadenosine + H2O + H(+) = S-methyl-5'-thioinosine + NH4(+). Functionally, catalyzes the deamination of 5-methylthioadenosine and S-adenosyl-L-homocysteine into 5-methylthioinosine and S-inosyl-L-homocysteine, respectively. Is also able to deaminate adenosine. This Syntrophus aciditrophicus (strain SB) protein is 5-methylthioadenosine/S-adenosylhomocysteine deaminase 1.